A 238-amino-acid polypeptide reads, in one-letter code: Small ribosomal subunit protein uS2 (238 aa).

The protein belongs to the universal ribosomal protein uS2 family.

The chain is Small ribosomal subunit protein uS2 from Prochlorococcus marinus (strain MIT 9211).